Consider the following 148-residue polypeptide: MEVILLEKIANLGNLGDKVNVKAGYGRNFLLPQGKATAATAENVAAFEARRAELEKLAAEKKASAEARAAQLAELEVTITATAGDEGKLFGSIGTHDIADALTASGVEVAKAEVRLPNGTIRQVGEYDVALHLHTDVEATVKVIVVAA.

It belongs to the bacterial ribosomal protein bL9 family.

Functionally, binds to the 23S rRNA. The sequence is that of Large ribosomal subunit protein bL9 from Ectopseudomonas mendocina (strain ymp) (Pseudomonas mendocina).